The primary structure comprises 153 residues: Natriuretic peptides A (153 aa).

Positions 1 to 25 (MGPFSTITVSFLFCLAFWHPDQIGA) are cleaved as a signal peptide. 2 propeptides span residues 26-123 (NPVY…TAPR) and 93-103 (DGEALGRSTWE). Residues 54 to 101 (EDEAVPPQALSEQSDEAGAALSPLPEVPPWTGEVSPAQRDGEALGRST) are disordered. Ser-129 carries the phosphoserine modification. The cysteines at positions 130 and 146 are disulfide-linked. The important for degradation of atrial natriuretic peptide by IDE stretch occupies residues 147-151 (NSFRY).

Belongs to the natriuretic peptide family. Homodimer; disulfide-linked antiparallel dimer. Post-translationally, the precursor molecule is proteolytically cleaved by CORIN at Arg-123 to produce the atrial natriuretic peptide. Undergoes further proteolytic cleavage by unknown proteases to give rise to long-acting natriuretic peptide, vessel dilator and kaliuretic peptide. Additional processing gives rise to the auriculin and atriopeptin peptides. In the kidneys, alternative processing by an unknown protease results in the peptide urodilatin. In terms of processing, cleavage by MME initiates degradation of the factor and thereby regulates its activity. Degradation by IDE results in reduced activation of NPR1 (in vitro). During IDE degradation, the resulting products can temporarily stimulate NPR2 to produce cGMP, before the fragments are completely degraded and inactivated by IDE (in vitro). Degraded by IDE. Post-translationally, phosphorylation on Ser-129 decreases vasorelaxant activity.

The protein resides in the secreted. It is found in the perikaryon. Its subcellular location is the cell projection. Functionally, hormone that plays a key role in mediating cardio-renal homeostasis, and is involved in vascular remodeling and regulating energy metabolism. Acts by specifically binding and stimulating NPR1 to produce cGMP, which in turn activates effector proteins, such as PRKG1, that drive various biological responses. Regulates vasodilation, natriuresis, diuresis and aldosterone synthesis and is therefore essential for regulating blood pressure, controlling the extracellular fluid volume and maintaining the fluid-electrolyte balance. Also involved in inhibiting cardiac remodeling and cardiac hypertrophy by inducing cardiomyocyte apoptosis and attenuating the growth of cardiomyocytes and fibroblasts. Plays a role in female pregnancy by promoting trophoblast invasion and spiral artery remodeling in uterus, and thus prevents pregnancy-induced hypertension. In adipose tissue, acts in various cGMP- and PKG-dependent pathways to regulate lipid metabolism and energy homeostasis. This includes up-regulating lipid metabolism and mitochondrial oxygen utilization by activating the AMP-activated protein kinase (AMPK), and increasing energy expenditure by acting via MAPK11 to promote the UCP1-dependent thermogenesis of brown adipose tissue. Binds the clearance receptor NPR3 which removes the hormone from circulation. Its function is as follows. May have a role in cardio-renal homeostasis through regulation of natriuresis, diuresis, vasodilation, and inhibiting aldosterone synthesis. In vitro, promotes the production of cGMP and induces vasodilation. May promote natriuresis, at least in part, by enhancing prostaglandin E2 synthesis resulting in the inhibition of renal Na+-K+-ATPase. However reports on the involvement of this peptide in mammal blood volume and blood pressure homeostasis are conflicting; according to a report, in vivo it is not sufficient to activate cGMP and does not inhibit collecting duct transport nor effect diuresis and natriuresis. Appears to bind to specific receptors that are distinct from the receptors bound by atrial natriuretic peptide and vessel dilator. Possibly enhances protein excretion in urine by decreasing proximal tubular protein reabsorption. In terms of biological role, may have a role in cardio-renal homeostasis through regulation of natriuresis, diuresis, and vasodilation. In vitro, promotes the production of cGMP and induces vasodilation. May promote natriuresis, at least in part, by enhancing prostaglandin E2 synthesis resulting in the inhibition of renal Na+-K+-ATPase. However reports on the involvement of this peptide in mammal blood volume and blood pressure homeostasis are conflicting; according to a report it is not sufficient to activate cGMP and does not inhibit collecting duct transport nor effect diuresis and natriuresis. Appears to bind to specific receptors that are distinct from the receptors bound by the atrial natriuretic and long-acting natriuretic peptides. Possibly functions in protein excretion in urine by maintaining the integrity of the proximal tubules and enhancing protein excretion by decreasing proximal tubular protein reabsorption. May have a role in cardio-renal homeostasis through regulation of diuresis and inhibiting aldosterone synthesis. In vitro, promotes the production of cGMP and induces vasodilation. May promote natriuresis, at least in part, by enhancing prostaglandin E2 synthesis resulting in the inhibition of renal Na+-K+-ATPase. May have a role in potassium excretion but not sodium excretion (natriuresis). Possibly enhances protein excretion in urine by decreasing proximal tubular protein reabsorption. Functionally, hormone produced in the kidneys that appears to be important for maintaining cardio-renal homeostasis. Mediates vasodilation, natriuresis and diuresis primarily in the renal system, in order to maintain the extracellular fluid volume and control the fluid-electrolyte balance. Specifically binds and stimulates cGMP production by renal transmembrane receptors, likely NPR1. Urodilatin not ANP, may be the natriuretic peptide responsible for the regulation of sodium and water homeostasis in the kidney. Its function is as follows. May have a role in cardio-renal homeostasis through regulation of natriuresis and vasodilation. In vivo promotes natriuresis and in vitro, vasodilates renal artery strips. In terms of biological role, may have a role in cardio-renal homeostasis through regulation of regulation of natriuresis and vasodilation. In vivo promotes natriuresis. In vitro, vasodilates intestinal smooth muscle but not smooth muscle strips. May have a role in cardio-renal homeostasis through regulation of natriuresis and vasodilation. In vivo promotes natriuresis. In vitro, selectively vasodilates intestinal and vascular smooth muscle strips. Functionally, may have a role in cardio-renal homeostasis through regulation of natriuresis and vasodilation. In vivo promotes natriuresis. In vitro, selectively vasodilates intestinal smooth muscle but not vascular smooth muscle strips. This chain is Natriuretic peptides A (NPPA), found in Oryctolagus cuniculus (Rabbit).